A 137-amino-acid polypeptide reads, in one-letter code: uncharacterized protein (137 aa).

This is an uncharacterized protein from Bos taurus (Bovine).